The following is a 924-amino-acid chain: Probable dipeptidyl-aminopeptidase B (924 aa).

Positions 1–104 (MPPFTYSDDT…DQRSPGDGQR (104 aa)) are disordered. At 1–111 (MPPFTYSDDT…GQRMDRSLRR (111 aa)) the chain is on the cytoplasmic side. Residues 9 to 23 (DTLRSGRDRFRDHSP) show a composition bias toward basic and acidic residues. Over residues 31–43 (SQETDSSASTTSI) the composition is skewed to polar residues. Basic and acidic residues-rich tracts occupy residues 47 to 58 (RIQERLDTKEFT) and 92 to 104 (SRSD…DGQR). The helical; Signal-anchor for type II membrane protein transmembrane segment at 112–132 (WLFIVSGVLVATWVIGLFVFV) threads the bilayer. Over 133–924 (SSKAYKPSSS…GMKKRAAPTA (792 aa)) the chain is Vacuolar. 2 N-linked (GlcNAc...) asparagine glycosylation sites follow: N231 and N364. S768 serves as the catalytic Charge relay system. N-linked (GlcNAc...) asparagine glycosylation occurs at N827. Active-site charge relay system residues include D845 and H878.

This sequence belongs to the peptidase S9B family.

It is found in the vacuole membrane. It catalyses the reaction Release of an N-terminal dipeptide, Xaa-Yaa-|-Zaa-, from a polypeptide, preferentially when Yaa is Pro, provided Zaa is neither Pro nor hydroxyproline.. Its function is as follows. Type IV dipeptidyl-peptidase which removes N-terminal dipeptides sequentially from polypeptides having unsubstituted N-termini provided that the penultimate residue is proline. This Sordaria macrospora (strain ATCC MYA-333 / DSM 997 / K(L3346) / K-hell) protein is Probable dipeptidyl-aminopeptidase B (DAPB).